The following is an 845-amino-acid chain: Putative DEAD-box ATP-dependent RNA helicase 33 (845 aa).

Disordered regions lie at residues 129–149 (GHPD…PMSP) and 282–302 (KFRK…NEGK). Residues 289–298 (STEEDSDEEG) are compositionally biased toward acidic residues. The Q motif signature appears at 375 to 403 (KRFDESCISPLTLKALSASGIVKMTRVQD). One can recognise a Helicase ATP-binding domain in the interval 406 to 590 (LSECLDGKDA…QLVLKRDHSY (185 aa)). An ATP-binding site is contributed by 419–426 (AKTGTGKS). Residues 538–541 (DEAD) carry the DEAD box motif. The Helicase C-terminal domain occupies 624-778 (LLKEHINNMP…QVDQSMAKID (155 aa)).

The protein belongs to the DEAD box helicase family.

It carries out the reaction ATP + H2O = ADP + phosphate + H(+). The chain is Putative DEAD-box ATP-dependent RNA helicase 33 (RH33) from Arabidopsis thaliana (Mouse-ear cress).